We begin with the raw amino-acid sequence, 159 residues long: Protein-export protein SecB (159 aa).

The protein belongs to the SecB family. Homotetramer, a dimer of dimers. One homotetramer interacts with 1 SecA dimer.

Its subcellular location is the cytoplasm. One of the proteins required for the normal export of preproteins out of the cell cytoplasm. It is a molecular chaperone that binds to a subset of precursor proteins, maintaining them in a translocation-competent state. It also specifically binds to its receptor SecA. This Shewanella amazonensis (strain ATCC BAA-1098 / SB2B) protein is Protein-export protein SecB.